A 1124-amino-acid chain; its full sequence is PAN2-PAN3 deadenylation complex catalytic subunit PAN2 (1124 aa).

WD repeat units lie at residues 19-58, 118-157, 158-195, and 309-348; these read IDNS…IPMP, PGFN…TTSF, NHTG…TVKS, and SSNT…SKNF. A linker region spans residues 351 to 484; it reads FPSYLEQPDF…EYKLSNKFEV (134 aa). In terms of domain architecture, USP spans 484–861; that stretch reads VPNCYSNLKI…KPIIVMYQLA (378 aa). The Exonuclease domain occupies 917-1091; the sequence is IAIDAEFVAL…EDANTALLLY (175 aa). Positions 920, 922, 1030, and 1083 each coordinate a divalent metal cation.

The protein belongs to the peptidase C19 family. PAN2 subfamily. Forms a heterotrimer with an asymmetric homodimer of the regulatory subunit PAN3 to form the poly(A)-nuclease (PAN) deadenylation complex. It depends on a divalent metal cation as a cofactor.

The protein resides in the cytoplasm. The enzyme catalyses Exonucleolytic cleavage of poly(A) to 5'-AMP.. Positively regulated by the regulatory subunit PAN3. Functionally, catalytic subunit of the poly(A)-nuclease (PAN) deadenylation complex, one of two cytoplasmic mRNA deadenylases involved in mRNA turnover. PAN specifically shortens poly(A) tails of RNA and the activity is stimulated by poly(A)-binding protein PAB1. PAN deadenylation is followed by rapid degradation of the shortened mRNA tails by the CCR4-NOT complex. Deadenylated mRNAs are then degraded by two alternative mechanisms, namely exosome-mediated 3'-5' exonucleolytic degradation, or deadenylation-dependent mRNA decaping and subsequent 5'-3' exonucleolytic degradation by XRN1. May also be involved in post-transcriptional maturation of mRNA poly(A) tails. The polypeptide is PAN2-PAN3 deadenylation complex catalytic subunit PAN2 (Debaryomyces hansenii (strain ATCC 36239 / CBS 767 / BCRC 21394 / JCM 1990 / NBRC 0083 / IGC 2968) (Yeast)).